The following is a 207-amino-acid chain: Small ribosomal subunit protein uS10m (207 aa).

The N-terminal 24 residues, 1 to 24, are a transit peptide targeting the mitochondrion; that stretch reads MLSVFGLRTVARCNSTLASGGARA.

The protein belongs to the universal ribosomal protein uS10 family. As to quaternary structure, part of the mitochondrial small ribosomal subunit.

It localises to the mitochondrion. Functionally, involved in mitochondrial genome encoded proteins translation. Involved in the binding of tRNA to the ribosomes. The chain is Small ribosomal subunit protein uS10m (RSM10) from Eremothecium gossypii (strain ATCC 10895 / CBS 109.51 / FGSC 9923 / NRRL Y-1056) (Yeast).